The chain runs to 2476 residues: Non-reducing polyketide synthase ausA (2476 aa).

The tract at residues 14–253 (VLFGPKYPEV…HHSNHTQAVE (240 aa)) is N-terminal acylcarrier protein transacylase domain (SAT). Residues 379 to 795 (AVPIAVTGMA…GSNAAIVLRE (417 aa)) form the Ketosynthase family 3 (KS3) domain. Active-site for beta-ketoacyl synthase activity residues include Cys-544, His-679, and His-718. The segment at 906–1210 (ICFGGQTGDT…LPTDLSGAQA (305 aa)) is malonyl-CoA:ACP transacylase (MAT) domain. Catalysis depends on Ser-993, which acts as the For acyl/malonyl transferase activity. The N-terminal hotdog fold stretch occupies residues 1277–1405 (QEASLVRLLR…GRVSLQAAGS (129 aa)). The PKS/mFAS DH domain maps to 1277–1584 (QEASLVRLLR…FTGVSIQSLK (308 aa)). The interval 1280–1583 (SLVRLLRQDG…TFTGVSIQSL (304 aa)) is product template (PT) domain. The Proton acceptor; for dehydratase activity role is filled by His-1310. Residues 1433 to 1584 (SSSGLKRSTV…FTGVSIQSLK (152 aa)) are C-terminal hotdog fold. Asp-1491 acts as the Proton donor; for dehydratase activity in catalysis. In terms of domain architecture, Carrier spans 1626 to 1700 (DGDLLAVQTM…GLVQRIFPGH (75 aa)). Ser-1660 carries the O-(pantetheine 4'-phosphoryl)serine modification. Residues 1862-2095 (QHASEHKLLH…GFNWVDWTDN (234 aa)) are methyltransferase (CMeT) domain. The segment at 2128–2476 (NTVQEQTVLY…YEFLRRHVGL (349 aa)) is thioesterase (TE) domain. Catalysis depends on for thioesterase activity residues Ser-2251, Asp-2413, and His-2445.

It catalyses the reaction 3 malonyl-CoA + acetyl-CoA + 2 S-adenosyl-L-methionine = 3,5-dimethylorsellinate + 2 S-adenosyl-L-homocysteine + 3 CO2 + 4 CoA. Its pathway is secondary metabolite biosynthesis; terpenoid biosynthesis. Its function is as follows. Non-reducing polyketide synthase; part of the gene cluster A that mediates the biosynthesis of austinol and dehydroaustinol, two fungal meroterpenoids. The first step of the pathway is the synthesis of 3,5-dimethylorsellinic acid by the polyketide synthase ausA. 3,5-dimethylorsellinic acid is then prenylated by the polyprenyl transferase ausN. Further epoxidation by the FAD-dependent monooxygenase ausM and cyclization by the probable terpene cyclase ausL lead to the formation of protoaustinoid A. Protoaustinoid A is then oxidized to spiro-lactone preaustinoid A3 by the combined action of the FAD-binding monooxygenases ausB and ausC, and the dioxygenase ausE. Acid-catalyzed keto-rearrangement and ring contraction of the tetraketide portion of preaustinoid A3 by ausJ lead to the formation of preaustinoid A4. The aldo-keto reductase ausK, with the help of ausH, is involved in the next step by transforming preaustinoid A4 into isoaustinone which is in turn hydroxylated by the P450 monooxygenase ausI to form austinolide. Finally, the cytochrome P450 monooxygenase ausG modifies austinolide to austinol. Austinol can be further modified to dehydroaustinol which forms a diffusible complex with diorcinol that initiates conidiation. Due to genetic rearrangements of the clusters and the subsequent loss of some enzymes, the end products of the Emericella nidulans austinoid biosynthesis clusters are austinol and dehydroaustinol, even if additional enzymes, such as the O-acetyltransferase ausQ and the cytochrome P450 monooxygenase ausR are still functional. The chain is Non-reducing polyketide synthase ausA from Emericella nidulans (strain FGSC A4 / ATCC 38163 / CBS 112.46 / NRRL 194 / M139) (Aspergillus nidulans).